Reading from the N-terminus, the 251-residue chain is MWIGVISLFPEMFRAITDFGVTGRAVKNGLLNVQYWSPRDFTYDRHRTVDDRPYGGGPGMLMMVQPLRDAIHAAKAAAGEGARVIYLSPQGRKLDQQGVRQLATNQKMILVCGRYEGIDERVIKTEIDEEWSIGDYVLSGGELPAMTLIDSVARFIPGVLGHQASAEEDSFADGLLDCPHFTRPEILESMDVPAVLLSGNHAEIRRWRLKQSLGRTWLRRPELLKSLALTDEQTRLLAEFQREYQSEQQEY.

S-adenosyl-L-methionine contacts are provided by residues Gly-113 and 133–138 (IGDYVL).

The protein belongs to the RNA methyltransferase TrmD family. Homodimer.

The protein localises to the cytoplasm. The catalysed reaction is guanosine(37) in tRNA + S-adenosyl-L-methionine = N(1)-methylguanosine(37) in tRNA + S-adenosyl-L-homocysteine + H(+). Its function is as follows. Specifically methylates guanosine-37 in various tRNAs. In Pectobacterium atrosepticum (strain SCRI 1043 / ATCC BAA-672) (Erwinia carotovora subsp. atroseptica), this protein is tRNA (guanine-N(1)-)-methyltransferase.